Reading from the N-terminus, the 394-residue chain is Na(+)/H(+) antiporter NhaA (394 aa).

A run of 11 helical transmembrane segments spans residues 24–44 (AGLV…SPLA), 58–78 (LSVQ…LVGL), 96–116 (TLPG…YVML), 126–146 (GWAI…SLLG), 155–175 (IFLA…IAIF), 180–200 (INVA…SLCA), 214–234 (AVLW…GVLL), 267–287 (VAFA…FASI), 300–320 (VAAG…ALMV), 336–356 (VLGV…IGLL), and 370–390 (GILA…RIAG).

Belongs to the NhaA Na(+)/H(+) (TC 2.A.33) antiporter family.

It localises to the cell inner membrane. It carries out the reaction Na(+)(in) + 2 H(+)(out) = Na(+)(out) + 2 H(+)(in). In terms of biological role, na(+)/H(+) antiporter that extrudes sodium in exchange for external protons. This chain is Na(+)/H(+) antiporter NhaA, found in Azorhizobium caulinodans (strain ATCC 43989 / DSM 5975 / JCM 20966 / LMG 6465 / NBRC 14845 / NCIMB 13405 / ORS 571).